A 1040-amino-acid polypeptide reads, in one-letter code: Multidrug resistance protein MdtB (1040 aa).

Transmembrane regions (helical) follow at residues 16–36, 347–367, 369–389, 396–416, 440–460, 472–492, 537–557, 863–883, 888–908, 911–931, 968–988, and 998–1018; these read FIMRPVATTLLMVAILLAGII, LMMAIALVVMIIYLFLRNIPA, IIPGVAVPLSLIGTFAVMVFL, LTLMALTIATGFVVDDAIVVI, IGFTIISLTFSLIAVLIPLLF, FAITLAVAILISAVVSLTLTP, WLTLSVALSTLLLSVLLWVFI, LGSTVWLIVAAVVAMYIVLGI, FIHPITILSTLPTAGVGALLA, IAGSELDVIAIIGIILLIGIV, ILMTTLAALLGALPLMLSTGV, and IGMVGGLIVSQVLTLFTTPVI.

This sequence belongs to the resistance-nodulation-cell division (RND) (TC 2.A.6) family. MdtB subfamily. In terms of assembly, part of a tripartite efflux system composed of MdtA, MdtB and MdtC. MdtB forms a heteromultimer with MdtC.

The protein resides in the cell inner membrane. The MdtABC tripartite complex confers resistance against novobiocin and deoxycholate. This is Multidrug resistance protein MdtB from Escherichia coli O81 (strain ED1a).